An 874-amino-acid chain; its full sequence is Bifunctional uridylyltransferase/uridylyl-removing enzyme (874 aa).

The uridylyltransferase stretch occupies residues 1–336 (MIDTSTITNP…DNGKTVETIQ (336 aa)). The segment at 337–695 (LSDDFQIRGH…LSKKATRGGT (359 aa)) is uridylyl-removing. Positions 455–577 (VDEHSVRLIK…VRDEERLDYL (123 aa)) constitute an HD domain. 2 ACT domains span residues 696–779 (EVFV…RAPR) and 802–874 (TMEL…TPQD).

This sequence belongs to the GlnD family. Mg(2+) serves as cofactor.

It catalyses the reaction [protein-PII]-L-tyrosine + UTP = [protein-PII]-uridylyl-L-tyrosine + diphosphate. The catalysed reaction is [protein-PII]-uridylyl-L-tyrosine + H2O = [protein-PII]-L-tyrosine + UMP + H(+). With respect to regulation, uridylyltransferase (UTase) activity is inhibited by glutamine, while glutamine activates uridylyl-removing (UR) activity. Its function is as follows. Modifies, by uridylylation and deuridylylation, the PII regulatory proteins (GlnB and homologs), in response to the nitrogen status of the cell that GlnD senses through the glutamine level. Under low glutamine levels, catalyzes the conversion of the PII proteins and UTP to PII-UMP and PPi, while under higher glutamine levels, GlnD hydrolyzes PII-UMP to PII and UMP (deuridylylation). Thus, controls uridylylation state and activity of the PII proteins, and plays an important role in the regulation of nitrogen assimilation and metabolism. This chain is Bifunctional uridylyltransferase/uridylyl-removing enzyme, found in Photobacterium profundum (strain SS9).